The sequence spans 179 residues: Large ribosomal subunit protein uL5 (179 aa).

It belongs to the universal ribosomal protein uL5 family. Part of the 50S ribosomal subunit; part of the 5S rRNA/L5/L18/L25 subcomplex. Contacts the 5S rRNA and the P site tRNA. Forms a bridge to the 30S subunit in the 70S ribosome.

Its function is as follows. This is one of the proteins that bind and probably mediate the attachment of the 5S RNA into the large ribosomal subunit, where it forms part of the central protuberance. In the 70S ribosome it contacts protein S13 of the 30S subunit (bridge B1b), connecting the 2 subunits; this bridge is implicated in subunit movement. Contacts the P site tRNA; the 5S rRNA and some of its associated proteins might help stabilize positioning of ribosome-bound tRNAs. This Prochlorococcus marinus (strain MIT 9303) protein is Large ribosomal subunit protein uL5.